The following is a 236-amino-acid chain: THO complex subunit 7B (236 aa).

The stretch at 99 to 228 (EANLREKESF…IRSASEDQRN (130 aa)) forms a coiled coil.

Belongs to the THOC7 family. Component of the THO complex, which is composed of THO1, THO2, THO3, THO5, THO6 and THO7.

Its subcellular location is the nucleus. In terms of biological role, acts as a component of the THO subcomplex of the TREX complex which is thought to couple mRNA transcription, processing and nuclear export. The protein is THO complex subunit 7B (THO7B) of Arabidopsis thaliana (Mouse-ear cress).